The following is a 77-amino-acid chain: uncharacterized protein (77 aa).

Basic and acidic residues-rich tracts occupy residues 1 to 24 (CPVAEEHFLVPAHEARGTQGEDQR) and 37 to 58 (EGPKLGEERPKPEAGALEERGP). The interval 1-77 (CPVAEEHFLV…RHGPKRKPAK (77 aa)) is disordered. Positions 66 to 77 (RPRHGPKRKPAK) are enriched in basic residues.

This is an uncharacterized protein from Macaca fascicularis (Crab-eating macaque).